We begin with the raw amino-acid sequence, 117 residues long: MKHLWFFLLLVAAPRWVLSQVQLQESGPGLVKPSDTLSLTCAVSGYSISSSNWWGWIRQPPGKGLEWIGYIYYSGSTYYNPSLKSRVTMSVDTSKNQFSLKLSSVTAVDTAVYYCAR.

The first 19 residues, 1–19, serve as a signal peptide directing secretion; that stretch reads MKHLWFFLLLVAAPRWVLS. Residues 20–44 form a framework-1 region; the sequence is QVQLQESGPGLVKPSDTLSLTCAVS. The region spanning 20–117 is the Ig-like domain; it reads QVQLQESGPG…VDTAVYYCAR (98 aa). A disulfide bond links cysteine 41 and cysteine 115. Residues 45–53 form a complementarity-determining-1 region; sequence GYSISSSNW. The tract at residues 54-70 is framework-2; that stretch reads WGWIRQPPGKGLEWIGY. The segment at 71 to 77 is complementarity-determining-2; sequence IYYSGST. The segment at 78–115 is framework-3; it reads YYNPSLKSRVTMSVDTSKNQFSLKLSSVTAVDTAVYYC. Positions 116-117 are complementarity-determining-3; sequence AR.

As to quaternary structure, immunoglobulins are composed of two identical heavy chains and two identical light chains; disulfide-linked.

The protein localises to the secreted. Its subcellular location is the cell membrane. V region of the variable domain of immunoglobulin heavy chains that participates in the antigen recognition. Immunoglobulins, also known as antibodies, are membrane-bound or secreted glycoproteins produced by B lymphocytes. In the recognition phase of humoral immunity, the membrane-bound immunoglobulins serve as receptors which, upon binding of a specific antigen, trigger the clonal expansion and differentiation of B lymphocytes into immunoglobulins-secreting plasma cells. Secreted immunoglobulins mediate the effector phase of humoral immunity, which results in the elimination of bound antigens. The antigen binding site is formed by the variable domain of one heavy chain, together with that of its associated light chain. Thus, each immunoglobulin has two antigen binding sites with remarkable affinity for a particular antigen. The variable domains are assembled by a process called V-(D)-J rearrangement and can then be subjected to somatic hypermutations which, after exposure to antigen and selection, allow affinity maturation for a particular antigen. In Homo sapiens (Human), this protein is Immunoglobulin heavy variable 4-28.